An 874-amino-acid chain; its full sequence is MLKKFDKKDEESGGGSNPLQHLEKSAVLQEARVFNETPINPRKCAHILTKILYLINQGEHLGTTEATEAFFAMTKLFQSNDPTLRRMCYLTIKEMSCIAEDVIIVTSSLTKDMTGKEDNYRGPAVRALCQITDSTMLQAVERYMKQAIVDKVPSVSSSALVSSLHLLKCSFDVVKRWVNEAQEAASSDNIMVQYHALGLLYHVRKNDRLAVSKMISKFTRHGLKSPFAYCMMIRVASKQLEEEDGSRDSPLFDFIESCLRNKHEMVVYEAASAIVNLPGCSAKELAPAVSVLQLFCSSPKAALRYAAVRTLNKVAMKHPSAVTACNLDLENLVTDSNRSIATLAITTLLKTGSESSIDRLMKQISSFMSEISDEFKVVVVQAISALCQKYPRKHAVLMNFLFTMLREEGGFEYKRAIVDCIISIIEENSESKETGLSHLCEFIEDCEFTVLATRILHLLGQEGPKTNNPSKYIRFIYNRVVLEHEEVRAGAVSALAKFGAQNEEMLPSILVLLKRCVMDDDNEVRDRATFYLNVLEQKQKALNAGYILNGLTVSIPGLEKALQQYTLEPSEKPFDLKSVPLATTPMTEQRPESTSTAAVKQPEKVAATRQEIFQEQLAAVPEFQGLGPLFKSSPEPVALTESETEYVIRCTKHTFSDHLVFQFDCTNTLNDQTLENVTVQMEPTEAYEVLSYVPVRSLPYNQPGTCYTLVALPKEDPTAVACTFSCVMKFTVKDCDPNTGEIDEEGYEDEYVLEDLEVTVADHIQKVMKVNFEAAWDEVGDEFEKEETFTLSTIKTLEEAVGNIVKFLGMHPCERSDKVPENKNTHTLLLAGVFRGGHDILVRSRLLLLDTVTMQVTARSSEELPVDIILASVG.

Positions 1–11 (MLKKFDKKDEE) are enriched in basic and acidic residues. The interval 1–21 (MLKKFDKKDEESGGGSNPLQH) is disordered. HEAT repeat units follow at residues 64-101 (TEAT…IAED), 283-320 (KELA…KHPS), 322-355 (VTAC…GSES), and 356-392 (SIDR…KYPR). At Thr594 the chain carries Phosphothreonine. Positions 609–874 (RQEIFQEQLA…PVDIILASVG (266 aa)) are interaction with ZNF289/ARFGAP2.

This sequence belongs to the COPG family. Oligomeric complex that consists of at least the alpha, beta, beta', gamma, delta, epsilon and zeta subunits. Interacts with ZNF289/ARFGAP2 through its C-terminal appendage domain. Interacts with EGFR upon EGF treatment; interaction is essential for regulation of EGF-dependent nuclear transport of EGFR by retrograde trafficking from the Golgi to the ER. The coatomer interacts with KDEL receptors; the interaction is important for retrograde trafficking of KDEL-bearing proteins from the Golgi to the endoplasmic reticulum. Interacts with COPB1. Interacts with TMED10 (via C-terminus). Interacts with TMED2, TMED3, TMED7 and TMED9.

It localises to the cytoplasm. The protein localises to the cytosol. Its subcellular location is the golgi apparatus membrane. The protein resides in the cytoplasmic vesicle. It is found in the COPI-coated vesicle membrane. Functionally, the coatomer is a cytosolic protein complex that binds to dilysine motifs and reversibly associates with Golgi non-clathrin-coated vesicles, which further mediate biosynthetic protein transport from the ER, via the Golgi up to the trans Golgi network. Coatomer complex is required for budding from Golgi membranes, and is essential for the retrograde Golgi-to-ER transport of dilysine-tagged proteins. In mammals, the coatomer can only be recruited by membranes associated to ADP-ribosylation factors (ARFs), which are small GTP-binding proteins; the complex also influences the Golgi structural integrity, as well as the processing, activity, and endocytic recycling of LDL receptors. Required for limiting lipid storage in lipid droplets. Involved in lipid homeostasis by regulating the presence of perilipin family members PLIN2 and PLIN3 at the lipid droplet surface and promoting the association of adipocyte triglyceride lipase (PNPLA2) with the lipid droplet surface to mediate lipolysis. In Rattus norvegicus (Rat), this protein is Coatomer subunit gamma-1 (Copg1).